Reading from the N-terminus, the 607-residue chain is MIQALLVIICLAVFPHQGSSIILESGNVNDYEVVYPQKVPALLKGGVQNPQPETKYEDTMRYEFQVNGEPVVLHLERNKGLFSEDYTETHYAPDGREITTSPPVQDHCYYHGYIQNEADSSAVISACNGLKGHFKHQGETYFIEPLELSESEAHAIYKDENVEKEDETPKICAVTQTTWESDESIEKTSQLTNTPEQDRYLQVKKYIEFYLVVDNKMYKNHTSNQELRTRVYEMVNYLNTKYRRLNFHIALIGLEIWSNQDKVDMDPGANVTLKSFAEWRAKLPPHKRNDNAQLLTGIDFNGTTVGLAYTGTLCTWGSVAVVQDYSRRTILMASTMAHELGHNMGIHHDKANCRCSHSPCIMSDTISDEPFYEFSSCSVREHQEYLLRERPQCILNKPSRKAIVSRPVCGNNFVEVGEQCDCGSLQDCQSTCCNATTCKLQPHAQCDSEECCEKCKFKGAETECRAAKDDCDLPEFCTGQSAECPTDSLQRNGHPCQNNQGYCYNGKCPTMENQCITLLGPNYTVGPAGCFKNNRKGDDVSHCRKENGAKIPCAAKDEKCGTLYCTEIKKTGCIVPVSPRDPDSRMVEPGTKCEDKKVCSKSQCVKV.

Residues 1–20 (MIQALLVIICLAVFPHQGSS) form the signal peptide. Residues 21-196 (IILESGNVND…KTSQLTNTPE (176 aa)) constitute a propeptide that is removed on maturation. The Peptidase M12B domain maps to 205–398 (KYIEFYLVVD…ERPQCILNKP (194 aa)). Glu-208 is a binding site for Ca(2+). N-linked (GlcNAc...) asparagine glycosylation is found at Asn-220 and Asn-270. A Ca(2+)-binding site is contributed by Asp-290. N-linked (GlcNAc...) asparagine glycosylation is present at Asn-301. 3 disulfide bridges follow: Cys-314/Cys-393, Cys-353/Cys-377, and Cys-355/Cys-360. Zn(2+) contacts are provided by His-338, His-342, and His-348. Ca(2+) is bound by residues Cys-393, Asn-396, Asn-411, Phe-413, Glu-415, Glu-418, and Asp-421. Positions 406–492 (RPVCGNNFVE…ECPTDSLQRN (87 aa)) constitute a Disintegrin domain. 14 disulfides stabilise this stretch: Cys-409-Cys-438, Cys-420-Cys-433, Cys-422-Cys-428, Cys-432-Cys-455, Cys-446-Cys-452, Cys-451-Cys-477, Cys-464-Cys-484, Cys-471-Cys-503, Cys-496-Cys-508, Cys-515-Cys-565, Cys-530-Cys-573, Cys-543-Cys-553, Cys-560-Cys-599, and Cys-593-Cys-604. Asn-434 is a glycosylation site (N-linked (GlcNAc...) asparagine). The D/ECD-tripeptide signature appears at 470 to 472 (DCD). Ca(2+) contacts are provided by Asp-472, Leu-473, Glu-475, Asp-487, and Ser-488. The N-linked (GlcNAc...) asparagine glycan is linked to Asn-522.

The protein belongs to the venom metalloproteinase (M12B) family. P-III subfamily. P-IIIa sub-subfamily. Monomer. The cofactor is Zn(2+). In terms of tissue distribution, expressed by the venom gland.

The protein localises to the secreted. Snake venom zinc metalloproteinase that inhibits platelet aggregation by cleaving platelet glycoprotein Ib alpha (GP1BA) at Glu-298/Asp-299, and abolishes binding of von Willebrand factor (VWF) to GPIBA. This Naja atra (Chinese cobra) protein is Zinc metalloproteinase-disintegrin-like atrase-A.